The primary structure comprises 50 residues: ATP synthase protein 8 (50 aa).

Residues 13–32 (ITFTFIILAITVYILSKYIL) form a helical membrane-spanning segment.

It belongs to the ATPase protein 8 family. As to quaternary structure, F-type ATPases have 2 components, CF(1) - the catalytic core - and CF(0) - the membrane proton channel.

The protein resides in the mitochondrion membrane. In terms of biological role, mitochondrial membrane ATP synthase (F(1)F(0) ATP synthase or Complex V) produces ATP from ADP in the presence of a proton gradient across the membrane which is generated by electron transport complexes of the respiratory chain. F-type ATPases consist of two structural domains, F(1) - containing the extramembraneous catalytic core and F(0) - containing the membrane proton channel, linked together by a central stalk and a peripheral stalk. During catalysis, ATP synthesis in the catalytic domain of F(1) is coupled via a rotary mechanism of the central stalk subunits to proton translocation. Part of the complex F(0) domain. Minor subunit located with subunit a in the membrane. The protein is ATP synthase protein 8 (ATP8) of Podospora anserina (strain S / ATCC MYA-4624 / DSM 980 / FGSC 10383) (Pleurage anserina).